The primary structure comprises 572 residues: Urease subunit alpha (572 aa).

Positions 136–572 (GGIDTHIHWI…VPLAQRYFLF (437 aa)) constitute a Urease domain. Ni(2+) is bound by residues His-141, His-143, and Lys-224. An N6-carboxylysine modification is found at Lys-224. His-226 provides a ligand contact to substrate. Positions 253 and 279 each coordinate Ni(2+). His-327 acts as the Proton donor in catalysis. Residue Asp-367 coordinates Ni(2+).

It belongs to the metallo-dependent hydrolases superfamily. Urease alpha subunit family. Heterotrimer of UreA (gamma), UreB (beta) and UreC (alpha) subunits. Three heterotrimers associate to form the active enzyme. Requires Ni cation as cofactor. Post-translationally, carboxylation allows a single lysine to coordinate two nickel ions.

The protein localises to the cytoplasm. It catalyses the reaction urea + 2 H2O + H(+) = hydrogencarbonate + 2 NH4(+). It functions in the pathway nitrogen metabolism; urea degradation; CO(2) and NH(3) from urea (urease route): step 1/1. The polypeptide is Urease subunit alpha (Actinobacillus pleuropneumoniae serotype 5b (strain L20)).